Here is a 124-residue protein sequence, read N- to C-terminus: Superoxide reductase (124 aa).

Residues Glu-14, His-16, His-41, His-47, Cys-111, and His-114 each contribute to the Fe cation site.

This sequence belongs to the desulfoferrodoxin family. Homotetramer. Fe cation serves as cofactor.

The catalysed reaction is reduced [rubredoxin] + superoxide + 2 H(+) = oxidized [rubredoxin] + H2O2. Its function is as follows. Uses electrons from reduced NADP, by way of rubredoxin and an oxidoreductase, to catalyze the reduction of superoxide to hydrogen peroxide. This Pyrococcus furiosus (strain ATCC 43587 / DSM 3638 / JCM 8422 / Vc1) protein is Superoxide reductase (sorA).